The following is a 136-amino-acid chain: Acyl carrier protein 1, chloroplastic (136 aa).

The N-terminal 52 residues, 1-52 (MASVTGTSISMASFKASLAPSRVSNLRSVSLPIKGKSFAPLRMRSARFVVCC), are a transit peptide targeting the chloroplast. The Carrier domain occupies 56–131 (PETVEKVCAI…DAADLIEKLI (76 aa)). Ser91 bears the O-(pantetheine 4'-phosphoryl)serine mark.

The protein belongs to the acyl carrier protein (ACP) family. Post-translationally, 4'-phosphopantetheine is transferred from CoA to a specific serine of apo-ACP by acpS. This modification is essential for activity because fatty acids are bound in thioester linkage to the sulfhydryl of the prosthetic group.

It localises to the plastid. The protein resides in the chloroplast. It functions in the pathway lipid metabolism; fatty acid biosynthesis. Functionally, carrier of the growing fatty acid chain in fatty acid biosynthesis. This Casuarina glauca (Swamp oak) protein is Acyl carrier protein 1, chloroplastic (ACP1).